The chain runs to 120 residues: Large ribosomal subunit protein bL12 (120 aa).

It belongs to the bacterial ribosomal protein bL12 family. As to quaternary structure, homodimer. Part of the ribosomal stalk of the 50S ribosomal subunit. Forms a multimeric L10(L12)X complex, where L10 forms an elongated spine to which 2 to 4 L12 dimers bind in a sequential fashion. Binds GTP-bound translation factors.

Functionally, forms part of the ribosomal stalk which helps the ribosome interact with GTP-bound translation factors. Is thus essential for accurate translation. The polypeptide is Large ribosomal subunit protein bL12 (Lactobacillus acidophilus (strain ATCC 700396 / NCK56 / N2 / NCFM)).